Consider the following 332-residue polypeptide: 2,3-diketo-L-gulonate reductase (332 aa).

The active-site Proton donor is H44. NAD(+) is bound by residues I168–S174, W224–K225, and G304–E306.

Belongs to the LDH2/MDH2 oxidoreductase family. DlgD subfamily. In terms of assembly, homodimer.

Its subcellular location is the cytoplasm. The catalysed reaction is 3-dehydro-L-gulonate + NAD(+) = 2,3-dioxo-L-gulonate + NADH + H(+). It carries out the reaction 3-dehydro-L-gulonate + NADP(+) = 2,3-dioxo-L-gulonate + NADPH + H(+). Functionally, catalyzes the reduction of 2,3-diketo-L-gulonate in the presence of NADH, to form 3-keto-L-gulonate. This is 2,3-diketo-L-gulonate reductase from Escherichia coli O17:K52:H18 (strain UMN026 / ExPEC).